Here is a 116-residue protein sequence, read N- to C-terminus: Ribosome-binding factor A (116 aa).

It belongs to the RbfA family. In terms of assembly, monomer. Binds 30S ribosomal subunits, but not 50S ribosomal subunits or 70S ribosomes.

It is found in the cytoplasm. In terms of biological role, one of several proteins that assist in the late maturation steps of the functional core of the 30S ribosomal subunit. Associates with free 30S ribosomal subunits (but not with 30S subunits that are part of 70S ribosomes or polysomes). Required for efficient processing of 16S rRNA. May interact with the 5'-terminal helix region of 16S rRNA. The chain is Ribosome-binding factor A from Ureaplasma urealyticum serovar 10 (strain ATCC 33699 / Western).